We begin with the raw amino-acid sequence, 181 residues long: Adenylate kinase (181 aa).

10–15 (GAGKGT) contributes to the ATP binding site. Residues 30–59 (STGDLFRANISQGTELGKQAQEYMDAGKLV) are NMP. Residues Thr31, Arg36, 57–59 (KLV), 85–88 (GFPR), and Gln92 contribute to the AMP site. The interval 126–132 (SRGRNDD) is LID. ATP is bound at residue Arg127. Residues Arg129 and Arg140 each contribute to the AMP site. Residue Gly166 participates in ATP binding.

Belongs to the adenylate kinase family. As to quaternary structure, monomer.

It localises to the cytoplasm. The catalysed reaction is AMP + ATP = 2 ADP. The protein operates within purine metabolism; AMP biosynthesis via salvage pathway; AMP from ADP: step 1/1. In terms of biological role, catalyzes the reversible transfer of the terminal phosphate group between ATP and AMP. Plays an important role in cellular energy homeostasis and in adenine nucleotide metabolism. The polypeptide is Adenylate kinase (Corynebacterium urealyticum (strain ATCC 43042 / DSM 7109)).